The sequence spans 342 residues: uncharacterized protein (342 aa).

9–31 (LIFGGTTGIGLMTTIDFIIHNTS) provides a ligand contact to NADP(+). Ser208 contacts substrate. Tyr222 serves as the catalytic Proton acceptor.

It belongs to the short-chain dehydrogenases/reductases (SDR) family.

This is an uncharacterized protein from Acanthamoeba polyphaga (Amoeba).